The following is a 75-amino-acid chain: Small ribosomal subunit protein bS21 (75 aa).

Residues 52–75 form a disordered region; the sequence is RRARKLARKRAQREGLIGGRPGAR. The span at 53–62 shows a compositional bias: basic residues; that stretch reads RARKLARKRA.

This sequence belongs to the bacterial ribosomal protein bS21 family.

This chain is Small ribosomal subunit protein bS21, found in Brucella anthropi (strain ATCC 49188 / DSM 6882 / CCUG 24695 / JCM 21032 / LMG 3331 / NBRC 15819 / NCTC 12168 / Alc 37) (Ochrobactrum anthropi).